The chain runs to 182 residues: Large ribosomal subunit protein uL10 (182 aa).

Belongs to the universal ribosomal protein uL10 family. Part of the ribosomal stalk of the 50S ribosomal subunit. The N-terminus interacts with L11 and the large rRNA to form the base of the stalk. The C-terminus forms an elongated spine to which L12 dimers bind in a sequential fashion forming a multimeric L10(L12)X complex.

Functionally, forms part of the ribosomal stalk, playing a central role in the interaction of the ribosome with GTP-bound translation factors. The protein is Large ribosomal subunit protein uL10 of Chloroflexus aurantiacus (strain ATCC 29364 / DSM 637 / Y-400-fl).